Here is a 363-residue protein sequence, read N- to C-terminus: Uroporphyrinogen decarboxylase (363 aa).

Substrate-binding positions include 27–31, Asp-77, Tyr-157, Thr-212, and His-333; that span reads RQAGR.

This sequence belongs to the uroporphyrinogen decarboxylase family. Homodimer.

The protein localises to the cytoplasm. The enzyme catalyses uroporphyrinogen III + 4 H(+) = coproporphyrinogen III + 4 CO2. It functions in the pathway porphyrin-containing compound metabolism; protoporphyrin-IX biosynthesis; coproporphyrinogen-III from 5-aminolevulinate: step 4/4. In terms of biological role, catalyzes the decarboxylation of four acetate groups of uroporphyrinogen-III to yield coproporphyrinogen-III. The chain is Uroporphyrinogen decarboxylase from Cupriavidus necator (strain ATCC 17699 / DSM 428 / KCTC 22496 / NCIMB 10442 / H16 / Stanier 337) (Ralstonia eutropha).